The following is a 269-amino-acid chain: MTSSTAARQLGFEPFASTAPTELRASSDVIHAAYRQVFQVFGNDHVMQSERLTSAESLLQQGNISVRDFVRLLAQSELYRQKFFYSTPQVRFIELNYKHLLGRAPYDESEISYHVNLYTEKGYEAEINSYIDSAEYQESFGERIVPHYRGFETQPGQKTVGFNRMFQIYRGYANSDRSQGKNKSAWLTQDLALNLASNIQTPNFGKGLTGVVAGDRGQLYRVRVIQADRGRTTQIRRSIQEYLVSYDQLSPTLQRLNQRGSRVVNISPA.

A PBS-linker domain is found at 2 to 177 (TSSTAARQLG…IYRGYANSDR (176 aa)). Residues 217-269 (GQLYRVRVIQADRGRTTQIRRSIQEYLVSYDQLSPTLQRLNQRGSRVVNISPA) enclose the CpcD-like domain.

The protein belongs to the phycobilisome linker protein family.

The protein localises to the cellular thylakoid membrane. In terms of biological role, rod linker protein, associated with phycocyanin. Linker polypeptides determine the state of aggregation and the location of the disk-shaped phycobiliprotein units within the phycobilisome and modulate their spectroscopic properties in order to mediate a directed and optimal energy transfer. This Microchaete diplosiphon (Fremyella diplosiphon) protein is Phycobilisome 37.5 kDa linker polypeptide, phycocyanin-associated, rod (cpcH2).